The sequence spans 234 residues: Phosphoribosylaminoimidazole-succinocarboxamide synthase (234 aa).

It belongs to the SAICAR synthetase family.

The catalysed reaction is 5-amino-1-(5-phospho-D-ribosyl)imidazole-4-carboxylate + L-aspartate + ATP = (2S)-2-[5-amino-1-(5-phospho-beta-D-ribosyl)imidazole-4-carboxamido]succinate + ADP + phosphate + 2 H(+). It functions in the pathway purine metabolism; IMP biosynthesis via de novo pathway; 5-amino-1-(5-phospho-D-ribosyl)imidazole-4-carboxamide from 5-amino-1-(5-phospho-D-ribosyl)imidazole-4-carboxylate: step 1/2. This chain is Phosphoribosylaminoimidazole-succinocarboxamide synthase, found in Staphylococcus carnosus (strain TM300).